Here is a 65-residue protein sequence, read N- to C-terminus: Bucain (65 aa).

4 cysteine pairs are disulfide-bonded: C3–C24, C17–C42, C46–C57, and C58–C63.

It belongs to the three-finger toxin family. Short-chain subfamily. Orphan group III sub-subfamily. Expressed by the venom gland.

It localises to the secreted. The protein is Bucain of Bungarus candidus (Malayan krait).